The sequence spans 95 residues: Co-chaperonin GroES (95 aa).

It belongs to the GroES chaperonin family. In terms of assembly, heptamer of 7 subunits arranged in a ring. Interacts with the chaperonin GroEL.

It localises to the cytoplasm. Together with the chaperonin GroEL, plays an essential role in assisting protein folding. The GroEL-GroES system forms a nano-cage that allows encapsulation of the non-native substrate proteins and provides a physical environment optimized to promote and accelerate protein folding. GroES binds to the apical surface of the GroEL ring, thereby capping the opening of the GroEL channel. The polypeptide is Co-chaperonin GroES (Streptococcus equi subsp. equi (strain 4047)).